Here is a 377-residue protein sequence, read N- to C-terminus: Chaperone protein DnaJ (377 aa).

In terms of domain architecture, J spans 5–70 (DYYQVLGVSR…KKRSAYDQLG (66 aa)). The CR-type zinc finger occupies 138–216 (GVTKIISFKT…CYGEGRYINT (79 aa)). Zn(2+) contacts are provided by Cys151, Cys154, Cys168, Cys171, Cys190, Cys193, Cys204, and Cys207. CXXCXGXG motif repeat units lie at residues 151–158 (CEACTGKG), 168–175 (CPTCRGSG), 190–197 (CQTCRGAG), and 204–211 (CTKCYGEG).

It belongs to the DnaJ family. In terms of assembly, homodimer. Zn(2+) serves as cofactor.

Its subcellular location is the cytoplasm. In terms of biological role, participates actively in the response to hyperosmotic and heat shock by preventing the aggregation of stress-denatured proteins and by disaggregating proteins, also in an autonomous, DnaK-independent fashion. Unfolded proteins bind initially to DnaJ; upon interaction with the DnaJ-bound protein, DnaK hydrolyzes its bound ATP, resulting in the formation of a stable complex. GrpE releases ADP from DnaK; ATP binding to DnaK triggers the release of the substrate protein, thus completing the reaction cycle. Several rounds of ATP-dependent interactions between DnaJ, DnaK and GrpE are required for fully efficient folding. Also involved, together with DnaK and GrpE, in the DNA replication of plasmids through activation of initiation proteins. In Orientia tsutsugamushi (strain Ikeda) (Rickettsia tsutsugamushi), this protein is Chaperone protein DnaJ.